The chain runs to 344 residues: Dihydroorotate dehydrogenase (quinone) (344 aa).

Residues 65–69 (AGLDK) and Thr89 contribute to the FMN site. Residue Lys69 participates in substrate binding. 114-118 (NRMGF) lines the substrate pocket. FMN-binding residues include Asn145 and Asn178. Asn178 contributes to the substrate binding site. Ser181 acts as the Nucleophile in catalysis. Asn183 contacts substrate. FMN is bound by residues Lys223 and Thr251. Residue 252-253 (NT) coordinates substrate. FMN is bound by residues Gly274, Gly303, and 324 to 325 (YS).

It belongs to the dihydroorotate dehydrogenase family. Type 2 subfamily. Monomer. The cofactor is FMN.

It localises to the cell membrane. The catalysed reaction is (S)-dihydroorotate + a quinone = orotate + a quinol. It participates in pyrimidine metabolism; UMP biosynthesis via de novo pathway; orotate from (S)-dihydroorotate (quinone route): step 1/1. Catalyzes the conversion of dihydroorotate to orotate with quinone as electron acceptor. The protein is Dihydroorotate dehydrogenase (quinone) of Cupriavidus necator (strain ATCC 17699 / DSM 428 / KCTC 22496 / NCIMB 10442 / H16 / Stanier 337) (Ralstonia eutropha).